We begin with the raw amino-acid sequence, 360 residues long: Dual-specificity RNA methyltransferase RlmN (360 aa).

The active-site Proton acceptor is the Glu93. Residues 99 to 326 (EEDRNTLCIS…VITRSSRGAD (228 aa)) form the Radical SAM core domain. The cysteines at positions 106 and 331 are disulfide-linked. [4Fe-4S] cluster contacts are provided by Cys113, Cys117, and Cys120. Residues 158–159 (GE), Ser190, 212–214 (SLN), and Asn288 contribute to the S-adenosyl-L-methionine site. Cys331 functions as the S-methylcysteine intermediate in the catalytic mechanism.

This sequence belongs to the radical SAM superfamily. RlmN family. [4Fe-4S] cluster serves as cofactor.

It localises to the cytoplasm. It catalyses the reaction adenosine(2503) in 23S rRNA + 2 reduced [2Fe-2S]-[ferredoxin] + 2 S-adenosyl-L-methionine = 2-methyladenosine(2503) in 23S rRNA + 5'-deoxyadenosine + L-methionine + 2 oxidized [2Fe-2S]-[ferredoxin] + S-adenosyl-L-homocysteine. The catalysed reaction is adenosine(37) in tRNA + 2 reduced [2Fe-2S]-[ferredoxin] + 2 S-adenosyl-L-methionine = 2-methyladenosine(37) in tRNA + 5'-deoxyadenosine + L-methionine + 2 oxidized [2Fe-2S]-[ferredoxin] + S-adenosyl-L-homocysteine. In terms of biological role, specifically methylates position 2 of adenine 2503 in 23S rRNA and position 2 of adenine 37 in tRNAs. m2A2503 modification seems to play a crucial role in the proofreading step occurring at the peptidyl transferase center and thus would serve to optimize ribosomal fidelity. This is Dual-specificity RNA methyltransferase RlmN from Geobacter sulfurreducens (strain ATCC 51573 / DSM 12127 / PCA).